The following is a 274-amino-acid chain: Ribosomal RNA small subunit methyltransferase A (274 aa).

S-adenosyl-L-methionine-binding residues include His-15, Leu-17, Gly-42, Glu-64, Asp-89, and Asn-109.

It belongs to the class I-like SAM-binding methyltransferase superfamily. rRNA adenine N(6)-methyltransferase family. RsmA subfamily.

It is found in the cytoplasm. It catalyses the reaction adenosine(1518)/adenosine(1519) in 16S rRNA + 4 S-adenosyl-L-methionine = N(6)-dimethyladenosine(1518)/N(6)-dimethyladenosine(1519) in 16S rRNA + 4 S-adenosyl-L-homocysteine + 4 H(+). Specifically dimethylates two adjacent adenosines (A1518 and A1519) in the loop of a conserved hairpin near the 3'-end of 16S rRNA in the 30S particle. May play a critical role in biogenesis of 30S subunits. This chain is Ribosomal RNA small subunit methyltransferase A, found in Synechococcus sp. (strain RCC307).